Here is a 383-residue protein sequence, read N- to C-terminus: S-adenosylmethionine synthase 1 (383 aa).

His15 contributes to the ATP binding site. Residue Asp17 coordinates Mg(2+). K(+) is bound at residue Glu43. L-methionine-binding residues include Glu56 and Gln99. Residues 99-109 (QSPDINLGVSR) are flexible loop. Residues 162–164 (DGK), 228–229 (RF), Asp237, 243–244 (RK), Ala260, and Lys264 each bind ATP. Asp237 is an L-methionine binding site. Position 268 (Lys268) interacts with L-methionine.

It belongs to the AdoMet synthase family. Homotetramer; dimer of dimers. The cofactor is Mg(2+). Requires K(+) as cofactor.

It is found in the cytoplasm. The catalysed reaction is L-methionine + ATP + H2O = S-adenosyl-L-methionine + phosphate + diphosphate. Its pathway is amino-acid biosynthesis; S-adenosyl-L-methionine biosynthesis; S-adenosyl-L-methionine from L-methionine: step 1/1. In terms of biological role, catalyzes the formation of S-adenosylmethionine (AdoMet) from methionine and ATP. The overall synthetic reaction is composed of two sequential steps, AdoMet formation and the subsequent tripolyphosphate hydrolysis which occurs prior to release of AdoMet from the enzyme. The polypeptide is S-adenosylmethionine synthase 1 (Rhodopseudomonas palustris (strain BisB18)).